The sequence spans 208 residues: MVLDELISEFDRGLRSLTGISRMSRPVPVPADTPDVELTPAERTHAAGLMRVNHVGEVCAQALYQAQKLTARTASAKAMFEEAAREEEDHLAWTAHRLKELDSRPSLLNPLWYAGALAIGVAAGTLGDKVSLGFMAETERQVESHLEGHMSELPPTDTASRAIVDQMRIDEVKHGKAATDAGGIELPLPARMLMRAASKVMTSTAYYL.

Glu57, Glu87, His90, Glu139, Glu171, and His174 together coordinate Fe cation.

It belongs to the COQ7 family. Fe cation is required as a cofactor.

The protein localises to the cell membrane. It carries out the reaction a 5-methoxy-2-methyl-3-(all-trans-polyprenyl)benzene-1,4-diol + AH2 + O2 = a 3-demethylubiquinol + A + H2O. Its pathway is cofactor biosynthesis; ubiquinone biosynthesis. In terms of biological role, catalyzes the hydroxylation of 2-nonaprenyl-3-methyl-6-methoxy-1,4-benzoquinol during ubiquinone biosynthesis. The polypeptide is 3-demethoxyubiquinol 3-hydroxylase (Burkholderia cenocepacia (strain HI2424)).